Consider the following 72-residue polypeptide: Translation initiation factor IF-1 (72 aa).

Positions 1–72 (MAKEDVIEVE…TRGRITYRFK (72 aa)) constitute an S1-like domain.

It belongs to the IF-1 family. Component of the 30S ribosomal translation pre-initiation complex which assembles on the 30S ribosome in the order IF-2 and IF-3, IF-1 and N-formylmethionyl-tRNA(fMet); mRNA recruitment can occur at any time during PIC assembly.

It localises to the cytoplasm. One of the essential components for the initiation of protein synthesis. Stabilizes the binding of IF-2 and IF-3 on the 30S subunit to which N-formylmethionyl-tRNA(fMet) subsequently binds. Helps modulate mRNA selection, yielding the 30S pre-initiation complex (PIC). Upon addition of the 50S ribosomal subunit IF-1, IF-2 and IF-3 are released leaving the mature 70S translation initiation complex. This is Translation initiation factor IF-1 from Listeria innocua serovar 6a (strain ATCC BAA-680 / CLIP 11262).